We begin with the raw amino-acid sequence, 32 residues long: Conotoxin Cltx-4 (32 aa).

A 4-hydroxyproline mark is found at Pro2, Pro24, Pro28, and Pro30. Ser32 carries the serine amide modification.

Contains 4 disulfide bonds. Expressed by the venom duct.

The protein resides in the secreted. The polypeptide is Conotoxin Cltx-4 (Californiconus californicus (California cone)).